Reading from the N-terminus, the 308-residue chain is Olfactory receptor 5K1 (308 aa).

Topologically, residues 1-25 (MAEENHTMKNEFILTGFTDHPELKT) are extracellular. N-linked (GlcNAc...) asparagine glycosylation is present at Asn5. The chain crosses the membrane as a helical span at residues 26 to 46 (LLFVVFFAIYLITVVGNISLV). The Cytoplasmic portion of the chain corresponds to 47–54 (ALIFTHRR). Residues 55–75 (LHTPMYIFLGNLALVDSCCAC) form a helical membrane-spanning segment. Topologically, residues 76–99 (AITPKMLENFFSENKRISLYECAV) are extracellular. A disulfide bridge links Cys97 with Cys189. A helical membrane pass occupies residues 100 to 120 (QFYFLCTVETADCFLLAAMAY). The Cytoplasmic portion of the chain corresponds to 121–139 (DRYVAICNPLQYHIMMSKK). Residues 140 to 160 (LCIQMTTGAFIAGNLHSMIHV) traverse the membrane as a helical segment. The Extracellular portion of the chain corresponds to 161–196 (GLVFRLVFCGSNHINHFYCDILPLYRLSCVDPYINE). The chain crosses the membrane as a helical span at residues 197–217 (LVLFIFSGSVQVFTIGSVLIS). Residues 218–237 (YLYILLTIFKMKSKEGRAKA) are Cytoplasmic-facing. Residues 238-258 (FSTCASHFLSVSLFYGSLFFM) form a helical membrane-spanning segment. Residues 259–271 (YVRPNLLEEGDKD) lie on the Extracellular side of the membrane. A helical transmembrane segment spans residues 272–292 (IPAAILFTIVVPLLNPFIYSL). Residues 293–308 (RNREVISVLRKILMKK) are Cytoplasmic-facing.

Belongs to the G-protein coupled receptor 1 family.

It localises to the cell membrane. In terms of biological role, odorant receptor. The protein is Olfactory receptor 5K1 (OR5K1) of Homo sapiens (Human).